The chain runs to 148 residues: Deoxyuridine 5'-triphosphate nucleotidohydrolase (148 aa).

Substrate is bound by residues 67 to 69 (RSG), asparagine 80, 84 to 86 (LID), and methionine 94.

The protein belongs to the dUTPase family. Mg(2+) is required as a cofactor.

It carries out the reaction dUTP + H2O = dUMP + diphosphate + H(+). The protein operates within pyrimidine metabolism; dUMP biosynthesis; dUMP from dCTP (dUTP route): step 2/2. Its function is as follows. This enzyme is involved in nucleotide metabolism: it produces dUMP, the immediate precursor of thymidine nucleotides and it decreases the intracellular concentration of dUTP so that uracil cannot be incorporated into DNA. This Paraburkholderia xenovorans (strain LB400) protein is Deoxyuridine 5'-triphosphate nucleotidohydrolase.